A 750-amino-acid polypeptide reads, in one-letter code: Coiled-coil domain-containing protein 142 (750 aa).

The segment at 1-29 (MAQASRSGSLPPLVIVPPLRAQPGGTGEE) is disordered. Positions 87–110 (ALQRLRAVLLRLHREREQLLQARD) form a coiled coil. The tract at residues 687 to 714 (LEPPLQPGTSPAQTGQLQSTLGGRGPSP) is disordered. Polar residues predominate over residues 693 to 707 (PGTSPAQTGQLQSTL).

The protein is Coiled-coil domain-containing protein 142 (CCDC142) of Homo sapiens (Human).